The chain runs to 391 residues: Tryptophan synthase beta chain (391 aa).

Lys84 is modified (N6-(pyridoxal phosphate)lysine).

It belongs to the TrpB family. As to quaternary structure, tetramer of two alpha and two beta chains. Requires pyridoxal 5'-phosphate as cofactor.

The enzyme catalyses (1S,2R)-1-C-(indol-3-yl)glycerol 3-phosphate + L-serine = D-glyceraldehyde 3-phosphate + L-tryptophan + H2O. The protein operates within amino-acid biosynthesis; L-tryptophan biosynthesis; L-tryptophan from chorismate: step 5/5. Its function is as follows. The beta subunit is responsible for the synthesis of L-tryptophan from indole and L-serine. The chain is Tryptophan synthase beta chain from Thermoanaerobacter pseudethanolicus (strain ATCC 33223 / 39E) (Clostridium thermohydrosulfuricum).